A 972-amino-acid chain; its full sequence is SWI/SNF-related matrix-associated actin-dependent regulator of chromatin subfamily A containing DEAD/H box 1A (972 aa).

Disordered regions lie at residues 15–76 (NAVG…SDLQ), 125–177 (DEDS…EKQE), and 217–333 (SSTD…EDSI). Basic and acidic residues-rich tracts occupy residues 22 to 42 (KSPD…RKAD) and 63 to 72 (EVVRMGKDSA). Residues 82 to 127 (DMEDKIIKLLEIFPQKSKKDLLEVIENTSTLDGAVAHCLMIYGDED) form the CUE 1 domain. The segment covering 128–138 (SGGRKDKGGRS) has biased composition (basic and acidic residues). Residues 156–169 (SESEDEDSEDEESE) show a composition bias toward acidic residues. Residues 175-218 (KQEALLKKLKRKLPDIEKEVLRDILKEHDWDYENALGSLLVFSS) form the CUE 2 domain. Residues 237–246 (HSKEKTDKIT) show a composition bias toward basic and acidic residues. Residues 247–263 (QRPSGSSSLSRWLTAAS) show a composition bias toward polar residues. The segment covering 279–290 (KSALSKSTSKNS) has biased composition (low complexity). The span at 307–332 (ASEDEDEIDSDVDSMSDDQDSEDEDS) shows a compositional bias: acidic residues. The Helicase ATP-binding domain occupies 460–628 (ILLHQHKLSG…MSLLNFIMPS (169 aa)). Position 473-480 (473-480 (DEMGLGKT)) interacts with ATP. A DEGH box motif is present at residues 579-582 (DEGH). In terms of domain architecture, Helicase C-terminal spans 805–966 (LLTKTLAKLK…AITEQMAELL (162 aa)).

Belongs to the SNF2/RAD54 helicase family.

It localises to the nucleus. It is found in the chromosome. It catalyses the reaction ATP + H2O = ADP + phosphate + H(+). Functionally, DNA helicase that possesses intrinsic ATP-dependent nucleosome-remodeling activity and is both required for DNA repair and heterochromatin organization. Promotes DNA end resection of double-strand breaks (DSBs) following DNA damage: probably acts by weakening histone DNA interactions in nucleosomes flanking DSBs. Required for the restoration of heterochromatin organization after replication. In Danio rerio (Zebrafish), this protein is SWI/SNF-related matrix-associated actin-dependent regulator of chromatin subfamily A containing DEAD/H box 1A (smarcad1a).